The sequence spans 81 residues: Cytotoxin 3b (81 aa).

Positions 1-21 (MKTLLLTLVVVTIVCLDLGYT) are cleaved as a signal peptide. 4 disulfide bridges follow: Cys-24–Cys-42, Cys-35–Cys-59, Cys-63–Cys-74, and Cys-75–Cys-80.

This sequence belongs to the three-finger toxin family. Short-chain subfamily. Type IA cytotoxin sub-subfamily. As to quaternary structure, monomer in solution; Homodimer and oligomer in the presence of negatively charged lipids forming a pore with a size ranging between 20 and 30 Angstroms. Expressed by the venom gland.

Its subcellular location is the secreted. It localises to the target cell membrane. Functionally, shows cytolytic activity on many different cells by forming pore in lipid membranes. In vivo, increases heart rate or kills the animal by cardiac arrest. In addition, it binds to heparin with high affinity, interacts with Kv channel-interacting protein 1 (KCNIP1) in a calcium-independent manner, and binds to integrin alpha-V/beta-3 (ITGAV/ITGB3) with moderate affinity. This chain is Cytotoxin 3b, found in Naja atra (Chinese cobra).